The sequence spans 292 residues: Shikimate dehydrogenase (NADP(+)) (292 aa).

Shikimate-binding positions include 25–27 (SKS) and Thr-72. The active-site Proton acceptor is Lys-76. Residues Asn-97 and Asp-113 each coordinate shikimate. Residues 137-141 (GAGGA), 161-166 (NRTQSK), and Met-230 each bind NADP(+). Tyr-232 is a shikimate binding site. Residue Gly-254 participates in NADP(+) binding.

This sequence belongs to the shikimate dehydrogenase family. Homodimer.

The catalysed reaction is shikimate + NADP(+) = 3-dehydroshikimate + NADPH + H(+). Its pathway is metabolic intermediate biosynthesis; chorismate biosynthesis; chorismate from D-erythrose 4-phosphate and phosphoenolpyruvate: step 4/7. Involved in the biosynthesis of the chorismate, which leads to the biosynthesis of aromatic amino acids. Catalyzes the reversible NADPH linked reduction of 3-dehydroshikimate (DHSA) to yield shikimate (SA). This Shewanella sp. (strain ANA-3) protein is Shikimate dehydrogenase (NADP(+)).